The following is a 290-amino-acid chain: Pyridoxal kinase PdxY (290 aa).

Substrate-binding positions include Ser12 and 47-48; that span reads TQ. ATP contacts are provided by residues Asp114, Glu151, Lys184, and 211–214; that span reads RPLL. A substrate-binding site is contributed by Asp225.

This sequence belongs to the pyridoxine kinase family. PdxY subfamily. In terms of assembly, homodimer. Mg(2+) serves as cofactor.

The enzyme catalyses pyridoxal + ATP = pyridoxal 5'-phosphate + ADP + H(+). It participates in cofactor metabolism; pyridoxal 5'-phosphate salvage; pyridoxal 5'-phosphate from pyridoxal: step 1/1. In terms of biological role, pyridoxal kinase involved in the salvage pathway of pyridoxal 5'-phosphate (PLP). Catalyzes the phosphorylation of pyridoxal to PLP. In Pseudomonas fluorescens (strain Pf0-1), this protein is Pyridoxal kinase PdxY.